Here is a 212-residue protein sequence, read N- to C-terminus: Protein GET1 (212 aa).

Topologically, residues M1–L4 are lumenal. The chain crosses the membrane as a helical span at residues L5–R24. Topologically, residues T25–R110 are cytoplasmic. The stretch at A75–K99 forms a coiled coil. The helical transmembrane segment at W111–F131 threads the bilayer. At D132–T155 the chain is on the lumenal side. A helical transmembrane segment spans residues V156–V172. Over G173 to Q212 the chain is Cytoplasmic. The segment at P189–Q212 is disordered. The segment covering G201 to Q212 has biased composition (basic and acidic residues).

Belongs to the WRB/GET1 family. In terms of assembly, interacts with GET3.

It is found in the endoplasmic reticulum membrane. Its function is as follows. Required for the post-translational delivery of tail-anchored (TA) proteins to the endoplasmic reticulum. Acts as a membrane receptor for soluble GET3, which recognizes and selectively binds the transmembrane domain of TA proteins in the cytosol. In Arthroderma otae (strain ATCC MYA-4605 / CBS 113480) (Microsporum canis), this protein is Protein GET1.